The chain runs to 250 residues: Flavin-dependent thymidylate synthase (250 aa).

The 227-residue stretch at 7–233 (LRVQLIAKTE…PAVFADFEVT (227 aa)) folds into the ThyX domain. Residues 92–95 (ELIR), 103–107 (QLSQR), and R172 each bind dUMP. Residues 95–97 (RHR) and Q103 contribute to the FAD site. The ThyX motif signature appears at 95 to 105 (RHRHFSYSQLS). Residues 188 to 190 (NYR) and H194 each bind FAD. R199 is a dUMP binding site. R199 (involved in ionization of N3 of dUMP, leading to its activation) is an active-site residue.

It belongs to the thymidylate synthase ThyX family. In terms of assembly, homotetramer. It depends on FAD as a cofactor.

The catalysed reaction is dUMP + (6R)-5,10-methylene-5,6,7,8-tetrahydrofolate + NADPH + H(+) = dTMP + (6S)-5,6,7,8-tetrahydrofolate + NADP(+). It functions in the pathway pyrimidine metabolism; dTTP biosynthesis. Functionally, catalyzes the reductive methylation of 2'-deoxyuridine-5'-monophosphate (dUMP) to 2'-deoxythymidine-5'-monophosphate (dTMP) while utilizing 5,10-methylenetetrahydrofolate (mTHF) as the methyl donor, and NADPH and FADH(2) as the reductant. The chain is Flavin-dependent thymidylate synthase from Mycobacterium marinum (strain ATCC BAA-535 / M).